Reading from the N-terminus, the 320-residue chain is Methionine import ATP-binding protein MetN (320 aa).

The ABC transporter domain occupies 2-237 (IEIKNVSKYF…PSSEMKKLIG (236 aa)). Residue 34–41 (GHSGAGKS) coordinates ATP.

Belongs to the ABC transporter superfamily. Methionine importer (TC 3.A.1.24) family. As to quaternary structure, the complex is composed of two ATP-binding proteins (MetN), two transmembrane proteins (MetI) and a solute-binding protein (MetQ).

It localises to the cell membrane. It catalyses the reaction L-methionine(out) + ATP + H2O = L-methionine(in) + ADP + phosphate + H(+). The enzyme catalyses D-methionine(out) + ATP + H2O = D-methionine(in) + ADP + phosphate + H(+). Its function is as follows. Part of the ABC transporter complex MetNIQ involved in methionine import. Responsible for energy coupling to the transport system. This Clostridium acetobutylicum (strain ATCC 824 / DSM 792 / JCM 1419 / IAM 19013 / LMG 5710 / NBRC 13948 / NRRL B-527 / VKM B-1787 / 2291 / W) protein is Methionine import ATP-binding protein MetN.